A 310-amino-acid polypeptide reads, in one-letter code: tRNA dimethylallyltransferase (310 aa).

10-17 (GPTAVGKS) contributes to the ATP binding site. 12–17 (TAVGKS) contacts substrate. The tract at residues 35–38 (DSMQ) is interaction with substrate tRNA.

It belongs to the IPP transferase family. Monomer. It depends on Mg(2+) as a cofactor.

It catalyses the reaction adenosine(37) in tRNA + dimethylallyl diphosphate = N(6)-dimethylallyladenosine(37) in tRNA + diphosphate. Functionally, catalyzes the transfer of a dimethylallyl group onto the adenine at position 37 in tRNAs that read codons beginning with uridine, leading to the formation of N6-(dimethylallyl)adenosine (i(6)A). This Clostridium perfringens (strain 13 / Type A) protein is tRNA dimethylallyltransferase.